A 219-amino-acid polypeptide reads, in one-letter code: ER lumen protein-retaining receptor (219 aa).

At 1–5 (MNPFR) the chain is on the lumenal side. A helical transmembrane segment spans residues 6–26 (ILGDLSHLTSILILIHNIKTT). Residues 27 to 37 (RYIEGISFKTQ) lie on the Cytoplasmic side of the membrane. 2 helical membrane passes run 38-58 (TLYA…HWVS) and 59-79 (LYNA…VVLL). Over 80-98 (QGSKRTNTIAYNEMLMHDT) the chain is Cytoplasmic. Residues 99–116 (FKIQHLLIGSALMSVFFH) traverse the membrane as a helical segment. At 117–118 (HK) the chain is on the lumenal side. A helical transmembrane segment spans residues 119–139 (FTFLELAWSFSVWLESVAILP). The Cytoplasmic segment spans residues 140-152 (QLYMLSKGGKTRS). A helical transmembrane segment spans residues 153-173 (LTVHYIFAMGLYRALYIPNWI). The Lumenal portion of the chain corresponds to 174-185 (WRYSTEDKKLDK). A helical membrane pass occupies residues 186-206 (IAFFAGLLQTLLYSDFFYIYY). Residues 207–219 (TKVIRGKGFKLPK) are Cytoplasmic-facing.

It belongs to the ERD2 family.

The protein localises to the endoplasmic reticulum membrane. Its function is as follows. Required for the retention of luminal endoplasmic reticulum proteins. Determines the specificity of the luminal ER protein retention system. Also required for normal vesicular traffic through the Golgi. This receptor strongly recognizes H-D-E-L and weakly recognizes D-D-E-L and K-D-E-L. In Saccharomyces cerevisiae (strain ATCC 204508 / S288c) (Baker's yeast), this protein is ER lumen protein-retaining receptor.